Consider the following 1136-residue polypeptide: Protein stu-1 (1136 aa).

HEAT repeat units lie at residues 95 to 133 (TLPVVVDKLGDQKDKFRQIAVQALTTLYKVAPVDVERSV) and 167 to 205 (YVPTLMELLEDADGSVRDVAKTTVIELFKNAPNTAKSDL). 3 disordered regions span residues 524–554 (KDPHNPNAHSRTETGGARPGMGLSKSVMGAP), 567–794 (RAMA…QPQI), and 821–884 (TAGQ…LLDS). Residues 595 to 622 (VSSTSQASVASASTASAVPAPTKSAFGA) show a composition bias toward low complexity. The segment covering 659 to 668 (PAEPASPPSK) has biased composition (pro residues). A compositionally biased stretch (polar residues) spans 673–683 (TVTSPKTQTLV). Positions 701-716 (SSESGIPIPVSGISSP) are enriched in low complexity. 2 stretches are compositionally biased toward polar residues: residues 777–793 (LPTQKTPSPTEESQQPQ) and 822–833 (AGQTQPQSTYTS).

It belongs to the CLASP family. In terms of assembly, interacts with microtubules.

It is found in the nucleus. The protein resides in the cytoplasm. Its subcellular location is the cytoskeleton. The protein localises to the spindle. Functionally, microtubule binding protein that promotes the stabilization of dynamic microtubules. Required for mitotic spindle formation. In Neurospora crassa (strain ATCC 24698 / 74-OR23-1A / CBS 708.71 / DSM 1257 / FGSC 987), this protein is Protein stu-1 (stu-1).